The chain runs to 140 residues: Lymphocyte antigen 6H (140 aa).

An N-terminal signal peptide occupies residues 1 to 25; it reads MLPAAMKGLGLALLAVLLCSAPAHG. One can recognise a UPAR/Ly6 domain in the interval 26 to 91; the sequence is LWCQDCTLTT…RHFFSDYLMG (66 aa). Intrachain disulfides connect Cys28–Cys52, Cys31–Cys40, Cys45–Cys73, Cys77–Cys104, and Cys105–Cys110. The N-linked (GlcNAc...) asparagine glycan is linked to Asn36. Residue Gly115 is the site of GPI-anchor amidated glycine attachment. Positions 116-140 are cleaved as a propeptide — removed in mature form; the sequence is AGHSPWALAGGLLLSLGPALLWAGP.

As to quaternary structure, interacts with CHRNA4 and CHRNA7. In terms of tissue distribution, highly expressed in brain (cerebral cortex, amygdala, hippocampus and subthalamic nucleus) and in acute human leukemic cell line MOLT-3. Also found in lower levels in testis, pancreas, small intestine and colon.

It localises to the cell membrane. Functionally, believed to act as a modulator of nicotinic acetylcholine receptors (nAChRs) activity. In vitro inhibits alpha-3:beta-4-containing nAChRs maximum response. May play a role in the intracellular trafficking of alpha-7-containing nAChRs and may inhibit their expression at the cell surface. Seems to inhibit alpha-7/CHRNA7 signaling in hippocampal neurons. This chain is Lymphocyte antigen 6H (LY6H), found in Homo sapiens (Human).